We begin with the raw amino-acid sequence, 163 residues long: MLKSLKQHTTTSLVLQHFANAGQAAVNCGMYAGLAATYGGKAMFQGVLGLCAYKEFAGEVMTGHAFGFAMPKVLSGLVAGVAGAIYHHPTAVMATFVTAAILTSPENAYETVKNAAFTGLEAAHFVYENTAGIANGVAGICNLVYENLPSHSEVSTSNICNRR.

It belongs to the UPF0416 family.

This is UPF0416 protein RBE_0909 from Rickettsia bellii (strain RML369-C).